Consider the following 257-residue polypeptide: Cytoplasmic envelopment protein 1 (257 aa).

The protein belongs to the herpesviridae cytoplasmic envelopment protein 1 family.

The protein localises to the virion. The protein resides in the virion tegument. It is found in the host cytoplasm. It localises to the host Golgi apparatus. Plays a critical role in cytoplasmic virus egress. Participates in the final step of tegumentation and envelope acquisition within the host cytoplasm. This chain is Cytoplasmic envelopment protein 1 (42), found in Connochaetes taurinus (Blue wildebeest).